A 292-amino-acid polypeptide reads, in one-letter code: Tubulin beta chain (292 aa).

GTP contacts are provided by asparagine 49 and asparagine 71. A disordered region spans residues 265 to 292 (SEYQQYQDATAEEEGEFDEEEEGDEEAA). Positions 274 to 292 (TAEEEGEFDEEEEGDEEAA) are enriched in acidic residues.

This sequence belongs to the tubulin family. Dimer of alpha and beta chains. A typical microtubule is a hollow water-filled tube with an outer diameter of 25 nm and an inner diameter of 15 nM. Alpha-beta heterodimers associate head-to-tail to form protofilaments running lengthwise along the microtubule wall with the beta-tubulin subunit facing the microtubule plus end conferring a structural polarity. Microtubules usually have 13 protofilaments but different protofilament numbers can be found in some organisms and specialized cells. Mg(2+) serves as cofactor.

It is found in the cytoplasm. It localises to the cytoskeleton. Functionally, tubulin is the major constituent of microtubules, a cylinder consisting of laterally associated linear protofilaments composed of alpha- and beta-tubulin heterodimers. Microtubules grow by the addition of GTP-tubulin dimers to the microtubule end, where a stabilizing cap forms. Below the cap, tubulin dimers are in GDP-bound state, owing to GTPase activity of alpha-tubulin. This Strongylocentrotus purpuratus (Purple sea urchin) protein is Tubulin beta chain.